The following is a 446-amino-acid chain: Maltoporin (446 aa).

The N-terminal stretch at 1-25 is a signal peptide; that stretch reads MMITLRKLPLAVAVAAGVMSAQAMA.

This sequence belongs to the porin LamB (TC 1.B.3) family. As to quaternary structure, homotrimer formed of three 18-stranded antiparallel beta-barrels, containing three independent channels.

Its subcellular location is the cell outer membrane. It catalyses the reaction beta-maltose(in) = beta-maltose(out). Its function is as follows. Involved in the transport of maltose and maltodextrins. This chain is Maltoporin, found in Escherichia coli O127:H6 (strain E2348/69 / EPEC).